The sequence spans 293 residues: ATP synthase gamma chain (293 aa).

This sequence belongs to the ATPase gamma chain family. F-type ATPases have 2 components, CF(1) - the catalytic core - and CF(0) - the membrane proton channel. CF(1) has five subunits: alpha(3), beta(3), gamma(1), delta(1), epsilon(1). CF(0) has three main subunits: a, b and c.

It is found in the cell inner membrane. Produces ATP from ADP in the presence of a proton gradient across the membrane. The gamma chain is believed to be important in regulating ATPase activity and the flow of protons through the CF(0) complex. The chain is ATP synthase gamma chain from Chlorobium chlorochromatii (strain CaD3).